Consider the following 816-residue polypeptide: Two pore channel protein 1 (816 aa).

Residues 1–112 are Cytoplasmic-facing; that stretch reads MAVSLDDDVP…AHNHLFYLME (112 aa). The disordered stretch occupies residues 17–64; the sequence is EGGSAPLAPSNGLGQEELPSKNGGSYAIHDSQAPSLSSGGESSPSSPA. Residues 50 to 63 show a composition bias toward low complexity; the sequence is PSLSSGGESSPSSP. Residues 113–133 traverse the membrane as a helical segment; it reads LATALLLLLLSLCEAPAVPAL. Residue R134 is a topological domain, extracellular. Residues 135 to 155 form a helical membrane-spanning segment; sequence LGIYVHATLELFALMVVVFEL. Residues 156–177 are Cytoplasmic-facing; it reads CMKLRWLGLHTFIRHKRTMVKT. A helical transmembrane segment spans residues 178-198; the sequence is SVLVVQFVEAIVVLVRQMSHV. The Extracellular portion of the chain corresponds to 199 to 200; that stretch reads RV. Residues 201-220 form a helical membrane-spanning segment; sequence TRALRCIFLVDCRYCGGVRR. Topologically, residues 221 to 234 are cytoplasmic; it reads NLRQIFQSLPPFMD. The chain crosses the membrane as a helical span at residues 235–255; that stretch reads ILLLLLFFMIIFAILGFYLFS. Topologically, residues 256–262 are extracellular; the sequence is PNPSDPY. Residues 263–286 constitute an intramembrane region (helical; Pore-forming); sequence FSTLENSIVSLFVLLTTANFPDVM. The Extracellular segment spans residues 287-294; the sequence is MPSYSRNP. Residues 295 to 315 traverse the membrane as a helical segment; sequence WSCVFFIVYLSIELYFIMNLL. Topologically, residues 316–444 are cytoplasmic; that stretch reads LAVVFDTFND…NILVKSKAFQ (129 aa). The chain crosses the membrane as a helical span at residues 445 to 465; the sequence is YFMYLVVAVNGVWILVETFML. The Extracellular portion of the chain corresponds to 466–479; the sequence is KGGNFFSKHVPWSY. The chain crosses the membrane as a helical span at residues 480 to 500; sequence LVFLTIYGVELFLKVAGLGPV. The Cytoplasmic portion of the chain corresponds to 501–503; the sequence is EYL. Residues 504–526 form a helical membrane-spanning segment; it reads SSGWNLFDFSVTVFAFLGLLALA. Over 527-534 the chain is Extracellular; it reads LNMEPFYF. Residues 535–549 traverse the membrane as a helical segment; the sequence is IVVLRPLQLLRLFKL. At 550-573 the chain is on the cytoplasmic side; the sequence is KERYRNVLDTMFELLPRMASLGLT. The chain crosses the membrane as a helical span at residues 574-594; that stretch reads LLIFYYSFAIVGMEFFCGIVF. The Extracellular portion of the chain corresponds to 595–629; sequence PNCCNTSTVADAYRWRNHTVGNRTVVEEGYYYLNN. Residues N599, N611, and N616 are each glycosylated (N-linked (GlcNAc...) asparagine). An intramembrane region (helical; Pore-forming) is located at residues 630–653; that stretch reads FDNILNSFVTLFELTVVNNWYIIM. At 654–670 the chain is on the extracellular side; that stretch reads EGVTSQTSHWSRLYFMT. Residues 671–691 traverse the membrane as a helical segment; that stretch reads FYIVTMVVMTIIVAFILEAFV. Residues 692–816 are Cytoplasmic-facing; the sequence is FRMNYSRKNQ…GSRQRSQTVT (125 aa). Residues 769-796 are a coiled coil; that stretch reads SLKMYQEEIQEWYEEHAREQEQQRQLSS. The interval 782–816 is disordered; the sequence is EEHAREQEQQRQLSSSAAPAAQQPPGSRQRSQTVT. A compositionally biased stretch (low complexity) spans 791–816; sequence QRQLSSSAAPAAQQPPGSRQRSQTVT.

This sequence belongs to the calcium channel alpha-1 subunit (TC 1.A.1.11) family. Two pore calcium channel subfamily. Dimer. Interacts with MTOR; the interaction is required for TPCN1 ATP sensitivity. Interacts with STX7, STX8 and STX12. Interacts with JPT2. Found in a complex with LSM12, TPCN1 and TPCN2. Post-translationally, N-glycosylated. As to expression, highest expression found in the heart and kidney, and lowest expression found in the spleen.

It is found in the lysosome membrane. The protein resides in the endosome membrane. It localises to the early endosome membrane. The protein localises to the recycling endosome membrane. The enzyme catalyses Na(+)(in) = Na(+)(out). The catalysed reaction is Ca(2+)(in) = Ca(2+)(out). Na(+) current is inhibited by ATP in a MTORC-dependent manner. ATP sensitivity is independent of PI(3,5)P2. Probably regulated by Mg(2+) ions, cytosolic Mg(2+) selectively inhibits outward current while lysosomal Mg(2+) modestly inhibits both the outward and inward currents. In the absence of Mg(2+), NAADP readily activates TPCN2, with properties similar to PI(3,5)P2. Both current elicited by PI(3,5)P2 as well as NAADP are inhibited by tetrandrine. Intracellular channel initially characterized as a non-selective Ca(2+)-permeable channel activated by NAADP (nicotinic acid adenine dinucleotide phosphate), it is also a voltage-gated highly-selective Na(+) channel activated directly by PI(3,5)P2 (phosphatidylinositol 3,5-bisphosphate) that senses pH changes and confers electrical excitability to organelles. Localizes to the early and recycling endosomes membranes where it plays a role in the uptake and processing of proteins and regulates organellar membrane excitability, membrane trafficking and pH homeostasis. Ion selectivity is not fixed but rather agonist-dependent and under defined ionic conditions, can be readily activated by both NAADP and PI(3,5)P2. Required for mTOR-dependent nutrient sensing. In terms of biological role, (Microbial infection) During Ebola virus (EBOV) infection, controls the movement of endosomes containing virus particles and is required by EBOV to escape from the endosomal network into the cell cytoplasm. This chain is Two pore channel protein 1, found in Homo sapiens (Human).